We begin with the raw amino-acid sequence, 590 residues long: Muscarinic acetylcholine receptor M3 (590 aa).

Residues 1 to 67 (MTLHNNSTTS…DPLGGHTVWQ (67 aa)) lie on the Extracellular side of the membrane. N-linked (GlcNAc...) asparagine glycans are attached at residues N5, N6, N15, N41, and N48. Residues 68 to 91 (VVFIAFLTGILALVTIIGNILVIV) traverse the membrane as a helical segment. The Cytoplasmic portion of the chain corresponds to 92 to 104 (SFKVNKQLKTVNN). The helical transmembrane segment at 105–130 (YFLLSLACADLIIGVISMNLFTTYII) threads the bilayer. Residues 131–142 (MNRWALGNLACD) are Extracellular-facing. The cysteines at positions 141 and 221 are disulfide-linked. Residues 143–164 (LWLAIDYVASNASVMNLLVISF) form a helical membrane-spanning segment. The Cytoplasmic portion of the chain corresponds to 165–184 (DRYFSITRPLTYRAKRTTKR). A helical membrane pass occupies residues 185–206 (AGVMIGLAWVISFVLWAPAILF). The Extracellular portion of the chain corresponds to 207–229 (WQYFVGKRTVPPGECFIQFLSEP). A helical membrane pass occupies residues 230-252 (TITFGTAIAAFYMPVTIMTILYW). The Cytoplasmic segment spans residues 253 to 491 (RIYKETEKRT…SLVKEKKAAQ (239 aa)). Residues 275-281 (AETENFV) carry the Basolateral sorting signal motif. A disordered region spans residues 323 to 357 (SSEQMDQDHSSSDSWNNNDAAASLENSASSDEEDI). A compositionally biased stretch (low complexity) spans 334-345 (SDSWNNNDAAAS). S385 is subject to Phosphoserine. The helical transmembrane segment at 492–514 (TLSAILLAFIITWTPYNIMVLVN) threads the bilayer. Residues 515–526 (TFCDSCIPKTFW) lie on the Extracellular side of the membrane. A disulfide bond links C517 and C520. Residues 527-546 (NLGYWLCYINSTVNPVCYAL) form a helical membrane-spanning segment. Residues 547 to 590 (CNKTFRTTFKMLLLCQCGKKKRRKQQYQQRQSVIFHKRAPEQAL) are Cytoplasmic-facing.

It belongs to the G-protein coupled receptor 1 family. Muscarinic acetylcholine receptor subfamily. CHRM3 sub-subfamily. Homodimer; the dimers can form tetramers. Interacts with NALCN. Interacts with TMEM147.

It localises to the cell membrane. The protein resides in the postsynaptic cell membrane. The protein localises to the basolateral cell membrane. It is found in the endoplasmic reticulum membrane. Its function is as follows. The muscarinic acetylcholine receptor mediates various cellular responses, including inhibition of adenylate cyclase, breakdown of phosphoinositides and modulation of potassium channels through the action of G proteins. Primary transducing effect is Pi turnover. This chain is Muscarinic acetylcholine receptor M3 (CHRM3), found in Gorilla gorilla gorilla (Western lowland gorilla).